The primary structure comprises 43 residues: Protein PsbN (43 aa).

The chain crosses the membrane as a helical span at residues 5–27; the sequence is TLVAIFISCSLVSFTGYALYTAF.

The protein belongs to the PsbN family.

It is found in the plastid. The protein resides in the chloroplast thylakoid membrane. May play a role in photosystem I and II biogenesis. The protein is Protein PsbN of Exsertotheca crispa (Moss).